Here is a 532-residue protein sequence, read N- to C-terminus: Maternal protein exuperantia (532 aa).

Disordered stretches follow at residues 206–251 (CSAS…NAVQ) and 403–491 (TVKP…NGLK). 2 stretches are compositionally biased toward low complexity: residues 220–231 (GSSMVSDSVSIS) and 404–417 (VKPV…NNNN). Positions 454 to 467 (SVSSLPDSTTKTPS) are enriched in polar residues. A Phosphoserine modification is found at Ser467.

In terms of assembly, component of the osk RNP complex, which is composed of at least exuperantia (exu), ypsilon schachtel (yps), aret (bruno), cup, and the mRNA of osk. In the sponge body, forms a ribonucleoprotein complex (RNP) containing at least me31B, exu, yps and the mRNA of osk; interactions with exu and yps are RNA dependent.

Its subcellular location is the cytoplasm. The protein resides in the cytoplasmic ribonucleoprotein granule. In terms of biological role, ensures the proper localization of the mRNA of the bicoid gene to the anterior regions of the oocyte thus playing a fundamental role in the establishment of the polarity of the oocyte. May bind the bcd mRNA. This is Maternal protein exuperantia (exu) from Drosophila melanogaster (Fruit fly).